Consider the following 329-residue polypeptide: Glycerol-3-phosphate dehydrogenase [NAD(P)+] (329 aa).

Positions 13, 14, 34, and 105 each coordinate NADPH. Sn-glycerol 3-phosphate-binding residues include K105, G134, and S136. Residue A138 participates in NADPH binding. The sn-glycerol 3-phosphate site is built by K189, D242, S252, R253, and N254. K189 serves as the catalytic Proton acceptor. Residue R253 coordinates NADPH. The NADPH site is built by V277 and E279.

Belongs to the NAD-dependent glycerol-3-phosphate dehydrogenase family.

It is found in the cytoplasm. It carries out the reaction sn-glycerol 3-phosphate + NAD(+) = dihydroxyacetone phosphate + NADH + H(+). It catalyses the reaction sn-glycerol 3-phosphate + NADP(+) = dihydroxyacetone phosphate + NADPH + H(+). It functions in the pathway membrane lipid metabolism; glycerophospholipid metabolism. Functionally, catalyzes the reduction of the glycolytic intermediate dihydroxyacetone phosphate (DHAP) to sn-glycerol 3-phosphate (G3P), the key precursor for phospholipid synthesis. This chain is Glycerol-3-phosphate dehydrogenase [NAD(P)+], found in Legionella pneumophila (strain Lens).